We begin with the raw amino-acid sequence, 458 residues long: Adenylosuccinate synthetase (458 aa).

GTP contacts are provided by residues 17 to 23 and 45 to 47; these read GDEGKGK and GHT. The Proton acceptor role is filled by aspartate 18. 2 residues coordinate Mg(2+): aspartate 18 and glycine 45. IMP contacts are provided by residues 18–21, 43–46, threonine 137, arginine 151, glutamine 247, threonine 262, and arginine 330; these read DEGK and NAGH. The Proton donor role is filled by histidine 46. 326 to 332 contacts substrate; the sequence is VTTGRSR. Residues arginine 332, 358 to 360, and 440 to 442 each bind GTP; these read KLD and STS.

This sequence belongs to the adenylosuccinate synthetase family. Homodimer. It depends on Mg(2+) as a cofactor.

It localises to the cytoplasm. The enzyme catalyses IMP + L-aspartate + GTP = N(6)-(1,2-dicarboxyethyl)-AMP + GDP + phosphate + 2 H(+). It participates in purine metabolism; AMP biosynthesis via de novo pathway; AMP from IMP: step 1/2. Its function is as follows. Plays an important role in the de novo pathway of purine nucleotide biosynthesis. Catalyzes the first committed step in the biosynthesis of AMP from IMP. This Verminephrobacter eiseniae (strain EF01-2) protein is Adenylosuccinate synthetase.